Here is a 66-residue protein sequence, read N- to C-terminus: Toxin BeM14 (66 aa).

The LCN-type CS-alpha/beta domain maps to 2–66 (RDAYIADDRN…IRKIPGEECR (65 aa)). 4 disulfides stabilise this stretch: C12-C65, C16-C36, C22-C46, and C26-C48.

Belongs to the long (4 C-C) scorpion toxin superfamily. Sodium channel inhibitor family. Alpha subfamily. In terms of tissue distribution, expressed by the venom gland.

The protein localises to the secreted. Its function is as follows. Alpha toxins bind voltage-independently at site-3 of sodium channels (Nav) and inhibit the inactivation of the activated channels, thereby blocking neuronal transmission. Has paralytic activity in mice. This Mesobuthus eupeus (Lesser Asian scorpion) protein is Toxin BeM14.